The sequence spans 315 residues: Methionyl-tRNA formyltransferase (315 aa).

The interval 2–189 (SESLRIIFAG…LITTLKQLAD (188 aa)) is N-terminal domain. 113–116 (SLLP) is a (6S)-5,6,7,8-tetrahydrofolate binding site. A C-terminal domain region spans residues 210–315 (KEEARIDWSL…EWFVPGNRLA (106 aa)).

Belongs to the Fmt family.

The enzyme catalyses L-methionyl-tRNA(fMet) + (6R)-10-formyltetrahydrofolate = N-formyl-L-methionyl-tRNA(fMet) + (6S)-5,6,7,8-tetrahydrofolate + H(+). In terms of biological role, attaches a formyl group to the free amino group of methionyl-tRNA(fMet). The formyl group appears to play a dual role in the initiator identity of N-formylmethionyl-tRNA by promoting its recognition by IF2 and preventing the misappropriation of this tRNA by the elongation apparatus. The polypeptide is Methionyl-tRNA formyltransferase (Escherichia coli O6:H1 (strain CFT073 / ATCC 700928 / UPEC)).